The primary structure comprises 364 residues: tRNA-specific 2-thiouridylase MnmA 2 (364 aa).

Residues 10–17 (GMSGGVDS) and M36 each bind ATP. The active-site Nucleophile is C106. A disulfide bond links C106 and C204. ATP is bound at residue G130. The interval 154 to 156 (KDQ) is interaction with tRNA. C204 (cysteine persulfide intermediate) is an active-site residue. An interaction with tRNA region spans residues 310–311 (RY).

It belongs to the MnmA/TRMU family.

It localises to the cytoplasm. The catalysed reaction is S-sulfanyl-L-cysteinyl-[protein] + uridine(34) in tRNA + AH2 + ATP = 2-thiouridine(34) in tRNA + L-cysteinyl-[protein] + A + AMP + diphosphate + H(+). In terms of biological role, catalyzes the 2-thiolation of uridine at the wobble position (U34) of tRNA, leading to the formation of s(2)U34. In Thermoanaerobacter pseudethanolicus (strain ATCC 33223 / 39E) (Clostridium thermohydrosulfuricum), this protein is tRNA-specific 2-thiouridylase MnmA 2.